The sequence spans 246 residues: Cytochrome c oxidase subunit 2 (246 aa).

2 helical membrane passes run 31-51 (HMMY…YVMM) and 72-92 (IMWT…SFML). 6 residues coordinate Cu cation: histidine 175, cysteine 210, glutamate 212, cysteine 214, histidine 218, and methionine 221. Glutamate 212 contacts Mg(2+).

It belongs to the cytochrome c oxidase subunit 2 family. As to quaternary structure, component of the cytochrome c oxidase (complex IV, CIV), a multisubunit enzyme composed of a catalytic core of 3 subunits and several supernumerary subunits. The complex exists as a monomer or a dimer and forms supercomplexes (SCs) in the inner mitochondrial membrane with ubiquinol-cytochrome c oxidoreductase (cytochrome b-c1 complex, complex III, CIII). Cu cation serves as cofactor.

It localises to the mitochondrion inner membrane. It carries out the reaction 4 Fe(II)-[cytochrome c] + O2 + 8 H(+)(in) = 4 Fe(III)-[cytochrome c] + 2 H2O + 4 H(+)(out). Its function is as follows. Component of the cytochrome c oxidase, the last enzyme in the mitochondrial electron transport chain which drives oxidative phosphorylation. The respiratory chain contains 3 multisubunit complexes succinate dehydrogenase (complex II, CII), ubiquinol-cytochrome c oxidoreductase (cytochrome b-c1 complex, complex III, CIII) and cytochrome c oxidase (complex IV, CIV), that cooperate to transfer electrons derived from NADH and succinate to molecular oxygen, creating an electrochemical gradient over the inner membrane that drives transmembrane transport and the ATP synthase. Cytochrome c oxidase is the component of the respiratory chain that catalyzes the reduction of oxygen to water. Electrons originating from reduced cytochrome c in the intermembrane space (IMS) are transferred via the dinuclear copper A center (CU(A)) of subunit 2 and heme A of subunit 1 to the active site in subunit 1, a binuclear center (BNC) formed by heme A3 and copper B (CU(B)). The BNC reduces molecular oxygen to 2 water molecules using 4 electrons from cytochrome c in the IMS and 4 protons from the mitochondrial matrix. This Debaryomyces hansenii (strain ATCC 36239 / CBS 767 / BCRC 21394 / JCM 1990 / NBRC 0083 / IGC 2968) (Yeast) protein is Cytochrome c oxidase subunit 2 (COX2).